We begin with the raw amino-acid sequence, 144 residues long: Large ribosomal subunit protein uL13 (144 aa).

The protein belongs to the universal ribosomal protein uL13 family. Part of the 50S ribosomal subunit.

In terms of biological role, this protein is one of the early assembly proteins of the 50S ribosomal subunit, although it is not seen to bind rRNA by itself. It is important during the early stages of 50S assembly. This chain is Large ribosomal subunit protein uL13, found in Chloroflexus aurantiacus (strain ATCC 29366 / DSM 635 / J-10-fl).